The following is a 2002-amino-acid chain: [F-actin]-monooxygenase MICAL3 (2002 aa).

Positions 2–494 (EERKHETMNP…RHLYDTGETK (493 aa)) are monooxygenase domain. FAD contacts are provided by residues Cys-97, 116 to 118 (EKR), 123 to 125 (RNN), Phe-183, Tyr-298, and Asp-398. The 107-residue stretch at 518–624 (VARSSKLLGW…YLTQFYEMFK (107 aa)) folds into the Calponin-homology (CH) domain. At Ser-649 the chain carries Phosphoserine. The disordered stretch occupies residues 658-706 (GQTISRKRSPKDKKEKDLDGAGKRRKTSQSEEEEAPRGHRGERPTLVST). A Nuclear localization signal motif is present at residues 663-684 (RKRSPKDKKEKDLDGAGKRRKT). Residues 669 to 679 (DKKEKDLDGAG) show a composition bias toward basic and acidic residues. Phosphoserine occurs at positions 685 and 687. The region spanning 762–824 (DTCYFCQKRV…KPHYCYRLSG (63 aa)) is the LIM zinc-binding domain. Residues Cys-764, Cys-767, His-785, Cys-788, Cys-791, Cys-794, Cys-814, and His-817 each contribute to the Zn(2+) site. Residues 835 to 883 (PLSGKEAKGPLQDGATTDANGRANAVASSTERTPGSGVNGLEEPSIAKR) form a disordered region. A Phosphothreonine modification is found at Thr-887. Disordered regions lie at residues 907–1313 (QEVP…SPLA), 1335–1776 (RRSL…GKHR), and 1791–1821 (LSFS…TYTE). Acidic residues predominate over residues 938–950 (SEMEEEGEEEEEE). Ser-977 carries the phosphoserine modification. The span at 991 to 1017 (NEEEEEEEEEYEEEEEEDYDEEEEESS) shows a compositional bias: acidic residues. A compositionally biased stretch (basic and acidic residues) spans 1041–1054 (HWTHIREREEEERM). Residues 1055–1066 (APASESSASGAP) show a composition bias toward low complexity. Residues 1068 to 1102 (DENDLEEDVDSEPAEIEGEAAEDGDPGDTGAELDD) show a composition bias toward acidic residues. 4 positions are modified to phosphoserine: Ser-1134, Ser-1143, Ser-1160, and Ser-1192. Over residues 1150–1163 (GPSQATSPIRSPQE) the composition is skewed to polar residues. The segment covering 1191–1218 (KSPEERLFPEPLLPKEKPKADAPSDLKA) has biased composition (basic and acidic residues). Over residues 1239 to 1258 (PGSPQPQPPVAASTPPPSPL) the composition is skewed to pro residues. Composition is skewed to polar residues over residues 1268 to 1280 (TEAT…QSPI) and 1288 to 1302 (KTST…QSQS). A Phosphoserine modification is found at Ser-1274. At Thr-1276 the chain carries Phosphothreonine. Ser-1278 is subject to Phosphoserine. Residues Ser-1310 and Ser-1337 each carry the phosphoserine modification. Thr-1341 is modified (phosphothreonine). A phosphoserine mark is found at Ser-1371 and Ser-1384. Positions 1407–1422 (PSDRELRSAQEERREL) are enriched in basic and acidic residues. Over residues 1423–1435 (SSSSGLGLHGSSS) the composition is skewed to low complexity. Residue Ser-1433 is modified to Phosphoserine. The span at 1436–1451 (NMKTLGSQSFNTSDSA) shows a compositional bias: polar residues. Thr-1454 carries the post-translational modification Phosphothreonine. A compositionally biased stretch (pro residues) spans 1456 to 1467 (PSSPPPPPPPGE). The span at 1516–1530 (SVEEIPFADDVEDTY) shows a compositional bias: acidic residues. The segment covering 1588 to 1604 (EAKELAEERMRAREKSV) has biased composition (basic and acidic residues). A Phosphoserine modification is found at Ser-1649. Position 1651 is a phosphothreonine (Thr-1651). A compositionally biased stretch (basic and acidic residues) spans 1657 to 1668 (GSEEPTLKHEAT). The span at 1674 to 1694 (SPPSDSGGPDGSFTSSEGSSG) shows a compositional bias: low complexity. The segment covering 1695–1713 (KSKKRSSLFSPRRNKKEKK) has biased composition (basic residues). Residues Ser-1701 and Ser-1704 each carry the phosphoserine modification. Residues 1760–1769 (CPSTPSSGAT) are compositionally biased toward polar residues. Basic and acidic residues predominate over residues 1804-1820 (VLEKSSQKSRREPRTYT). The stretch at 1821-1992 (EEELNAKLTR…EEDKDLEAAM (172 aa)) forms a coiled coil. Residues 1841–1990 (KQEELKRLHR…EREEDKDLEA (150 aa)) enclose the bMERB domain. Ser-1912 bears the Phosphoserine mark.

This sequence belongs to the Mical family. Interacts with RAB1B, RAB8A, RAB10, RAB13 and RAB15 (in their GTP-bound forms); binding to RAB1B is of low affinity compared to other Rab proteins; at least in case of RAB8A can bind 2 molecules of RAB8A simultaneously through a high and a low affinity binding site, respectively. Interacts with ERC1 and RAB8A; may bridge ERC1 with RAB8A. Interacts with KIF23 and ERC1; enhances the interaction between KIF23 and ERC1. Interacts with NINL isoform 2. FAD is required as a cofactor. Ubiquitous.

The protein localises to the cytoplasm. The protein resides in the cell cortex. It is found in the cytoskeleton. Its subcellular location is the nucleus. It localises to the midbody. The protein localises to the spindle. The protein resides in the cilium basal body. It catalyses the reaction L-methionyl-[F-actin] + NADPH + O2 + H(+) = L-methionyl-(R)-S-oxide-[F-actin] + NADP(+) + H2O. Functionally, monooxygenase that promotes depolymerization of F-actin by mediating oxidation of specific methionine residues on actin to form methionine-sulfoxide, resulting in actin filament disassembly and preventing repolymerization. In the absence of actin, it also functions as a NADPH oxidase producing H(2)O(2). Seems to act as Rab effector protein and plays a role in vesicle trafficking. Involved in exocytic vesicles tethering and fusion: the monooxygenase activity is required for this process and implicates RAB8A associated with exocytotic vesicles. Required for cytokinesis. Contributes to stabilization and/or maturation of the intercellular bridge independently of its monooxygenase activity. Promotes recruitment of Rab8 and ERC1 to the intercellular bridge, and together these proteins are proposed to function in timely abscission. The polypeptide is [F-actin]-monooxygenase MICAL3 (MICAL3) (Homo sapiens (Human)).